The primary structure comprises 678 residues: MSEPRKILVTSALPYANGSIHLGHMLEYIQTDMWVRFQKMRGNQAVYVCADDAHGSAIMLRAEREGITSEQLIDAVRAEHMGDFADFLVDFDNYHSTHSEENRELSSAIYLKLRDAGHIDTRPVTQYFDPEKQMFLADRFIKGTCPKCGTADQYGDNCEACGATYAPTELKDPKSAISGATPVLKESLHYFFKLPDFEAMLKQWTRSGALQESVANKLAEWLDSGLQQWDISRDAPYFGFEIPDAPGKYFYVWLDAPIGYMASFKNLCARRPELDFDAFWGKDSSAELYHFIGKDIVNFHALFWPAMLEGAGYRKPTALNVHGYLTVNGQKMSKSRGTFVKARTYLDHLDPEYLRYYYASKLGRGVEDLDLNLEDFVQKVNSDLVGKVVNIASRCAGFIHKGNAGVLVGADPAPELLAAFREAAPGIAEAYEARDFNRAMREIMALADRANAWIAEQAPWALAKQEGQQDKVQAVCGLGINLFRQLVIFLKPVLPKLAAAAEAFLNVAPLTWADHRTLLANHQLNPFQPLMTRIEPAKVEAMIEASKEDLAAAASQPAGNGELVKEPIAAEIDFDAFAAVDLRIALIEKCEFVEGADKLLRLSLDIGDAKRNVFSGIKSAYPDPSALEGRLTLYVANLAPRKMKFGVSEGMVLAAGPGGEEIYLLSPDSGAKPGQRVK.

The 'HIGH' region motif lies at 14–24 (PYANGSIHLGH). Positions 145, 148, 158, and 161 each coordinate Zn(2+). The 'KMSKS' region motif lies at 331–335 (KMSKS). ATP is bound at residue Lys334. The tRNA-binding domain maps to 576–678 (AFAAVDLRIA…SGAKPGQRVK (103 aa)).

The protein belongs to the class-I aminoacyl-tRNA synthetase family. MetG type 1 subfamily. In terms of assembly, homodimer. It depends on Zn(2+) as a cofactor.

Its subcellular location is the cytoplasm. It catalyses the reaction tRNA(Met) + L-methionine + ATP = L-methionyl-tRNA(Met) + AMP + diphosphate. In terms of biological role, is required not only for elongation of protein synthesis but also for the initiation of all mRNA translation through initiator tRNA(fMet) aminoacylation. This is Methionine--tRNA ligase from Pseudomonas aeruginosa (strain UCBPP-PA14).